A 375-amino-acid chain; its full sequence is Holliday junction branch migration complex subunit RuvB (375 aa).

The disordered stretch occupies residues Met1–Pro50. The large ATPase domain (RuvB-L) stretch occupies residues Glu13–Tyr209. The segment covering Lys19–Gln28 has biased composition (polar residues). Residues Glu40–Arg49 are compositionally biased toward basic and acidic residues. Residues Ile48, Arg49, Gly90, Lys93, Thr94, Thr95, Glu156–Phe158, Arg199, Tyr209, and Arg246 contribute to the ATP site. Thr94 serves as a coordination point for Mg(2+). Positions Glu210–Asn280 are small ATPAse domain (RuvB-S). Residues Pro283 to Thr375 form a head domain (RuvB-H) region. DNA is bound by residues Arg338 and Arg343.

It belongs to the RuvB family. In terms of assembly, homohexamer. Forms an RuvA(8)-RuvB(12)-Holliday junction (HJ) complex. HJ DNA is sandwiched between 2 RuvA tetramers; dsDNA enters through RuvA and exits via RuvB. An RuvB hexamer assembles on each DNA strand where it exits the tetramer. Each RuvB hexamer is contacted by two RuvA subunits (via domain III) on 2 adjacent RuvB subunits; this complex drives branch migration. In the full resolvosome a probable DNA-RuvA(4)-RuvB(12)-RuvC(2) complex forms which resolves the HJ.

It localises to the cytoplasm. It catalyses the reaction ATP + H2O = ADP + phosphate + H(+). Its function is as follows. The RuvA-RuvB-RuvC complex processes Holliday junction (HJ) DNA during genetic recombination and DNA repair, while the RuvA-RuvB complex plays an important role in the rescue of blocked DNA replication forks via replication fork reversal (RFR). RuvA specifically binds to HJ cruciform DNA, conferring on it an open structure. The RuvB hexamer acts as an ATP-dependent pump, pulling dsDNA into and through the RuvAB complex. RuvB forms 2 homohexamers on either side of HJ DNA bound by 1 or 2 RuvA tetramers; 4 subunits per hexamer contact DNA at a time. Coordinated motions by a converter formed by DNA-disengaged RuvB subunits stimulates ATP hydrolysis and nucleotide exchange. Immobilization of the converter enables RuvB to convert the ATP-contained energy into a lever motion, pulling 2 nucleotides of DNA out of the RuvA tetramer per ATP hydrolyzed, thus driving DNA branch migration. The RuvB motors rotate together with the DNA substrate, which together with the progressing nucleotide cycle form the mechanistic basis for DNA recombination by continuous HJ branch migration. Branch migration allows RuvC to scan DNA until it finds its consensus sequence, where it cleaves and resolves cruciform DNA. This is Holliday junction branch migration complex subunit RuvB from Synechococcus elongatus (strain ATCC 33912 / PCC 7942 / FACHB-805) (Anacystis nidulans R2).